The following is a 1309-amino-acid chain: Putative receptor-type tyrosine-protein phosphatase mosPTP-1 (1309 aa).

The first 36 residues, 1–36, serve as a signal peptide directing secretion; that stretch reads MNSAPRNAGAARSVDRRGFIAACGLLVLLVVRMLGA. The Extracellular portion of the chain corresponds to 37–572; that stretch reads ADATRIFDIE…RQVYDDYNLA (536 aa). Asn-60, Asn-107, Asn-162, Asn-257, Asn-353, Asn-389, Asn-455, Asn-501, and Asn-513 each carry an N-linked (GlcNAc...) asparagine glycan. 4 consecutive Fibronectin type-III domains span residues 147 to 244, 249 to 347, 350 to 449, and 450 to 553; these read PPGR…TLRE, KPVT…DEGV, KPLN…SGPS, and APKV…LQLH. Residues 573–593 form a helical membrane-spanning segment; that stretch reads VLGGIVFSCFGLLLIVLSFLL. The Cytoplasmic portion of the chain corresponds to 594–1309; the sequence is WKKCFHAAYY…NHLNLDHNQS (716 aa). Tyrosine-protein phosphatase domains are found at residues 656 to 921 and 944 to 1196; these read FSKE…LVEA and IDNQ…LSYM. The Phosphocysteine intermediate role is filled by Cys-862. The disordered stretch occupies residues 1239–1269; that stretch reads NSGDGGGNGNDGVPTGNGTNGGLPMSGGGTT. Residues 1256 to 1268 show a composition bias toward gly residues; sequence GTNGGLPMSGGGT.

The protein belongs to the protein-tyrosine phosphatase family. Receptor class subfamily. In terms of assembly, interacts with C-type lectin mosGCTL-1; the interaction probably mediates the recruitment of West Nile virus particles in complex with C-type lectin mosGCTL-1 to the cell surface. Interacts with C-type lectin mosGCTL-7; the interaction probably mediates the recruitment of Japanese encephalitis virus particles in complex with C-type lectin mosGCTL-7 to the cell surface. Salivary gland (at protein level). Hemolymph. Low-level expression in midgut.

The protein localises to the cell membrane. It catalyses the reaction O-phospho-L-tyrosyl-[protein] + H2O = L-tyrosyl-[protein] + phosphate. Its function is as follows. Putative protein tyrosine-protein phosphatase. (Microbial infection) Facilitates West Nile virus infection in mosquitoes probably via recruiting West Nile virus particles in complex with C-type lectin mosGCTL-1 to the cell surface. Functionally, (Microbial infection) Facilitates Japanese encephalitis virus infection in mosquitoes probably via recruiting Japanese encephalitis virus particles in complex with C-type lectin mosGCTL-7 to the cell surface. The chain is Putative receptor-type tyrosine-protein phosphatase mosPTP-1 from Aedes aegypti (Yellowfever mosquito).